Consider the following 383-residue polypeptide: Probable indole-3-pyruvate monooxygenase YUCCA10 (383 aa).

9–14 (GAGPAG) lines the FAD pocket. An NADP(+)-binding site is contributed by 177–182 (GGGNSG).

This sequence belongs to the FMO family. Requires FAD as cofactor.

The catalysed reaction is indole-3-pyruvate + NADPH + O2 + H(+) = (indol-3-yl)acetate + CO2 + NADP(+) + H2O. The protein operates within plant hormone metabolism; auxin biosynthesis. Involved in auxin biosynthesis. In Arabidopsis thaliana (Mouse-ear cress), this protein is Probable indole-3-pyruvate monooxygenase YUCCA10 (YUC10).